The following is a 271-amino-acid chain: HTH-type transcriptional repressor AllR (271 aa).

Residues 21 to 83 (AQALERGIAI…SQLGWWHIGL (63 aa)) enclose the HTH iclR-type domain. The H-T-H motif DNA-binding region spans 43–62 (VSDISLNLDLPLSTTFRLLK). The IclR-ED domain occupies 98–267 (VLSVAGPFMR…ARDISTALGL (170 aa)). Glyoxylate contacts are provided by residues 154 to 156 (SGA), aspartate 207, cysteine 217, and 234 to 236 (SIS).

Its function is as follows. Negative regulator of allantoin and glyoxylate utilization operons. Binds to the gcl promoter and to the allS-allA intergenic region. The protein is HTH-type transcriptional repressor AllR (allR) of Escherichia coli O6:H1 (strain CFT073 / ATCC 700928 / UPEC).